The chain runs to 445 residues: MIGRFIARNYTTSIFQESKRIVESTTLSNGLKVVSLVGGYTGPAVSLGLYIKTGSRNETQETAGLNQVLKGLAFESNTNKLGIEVQRDIEVSGSTAFAQASRDNLLIALQTLPNRSLQMLNNLANITKPTLPYHEVRDVTEIIVKESEAYNHDSYSSIFESVHQTAFRGKTLGRPLVAPICNLGNITKDAVTNWVNSTYKPSNMILVGVGLSHNELIEEAEKVTFGNDESSTSISNETAQYIGGESLKYSSGNSKVVLAFEGTAQSNIKDVAAFSVLQSILGNGCPKTAPGHGRTSRLFSLTKNNSNIVNSEAFNLTYGDSGLFGVVAEVEGATVGKTVSLITSEIVAASKTAGQELERAKAVTKSSVLEQAESRTSALEFIGKQAIYTDKVLTPAEFAEEISKVTSEDIKRVAKKMTSKKPTLVVVGDVSDAPTIESVQSQLKL.

A mitochondrion-targeting transit peptide spans 1-13 (MIGRFIARNYTTS).

Belongs to the peptidase M16 family. Heterodimer of alpha and beta subunits, forming the mitochondrial processing protease (MPP) in which subunit alpha is involved in substrate recognition and binding and subunit beta is the catalytic subunit.

The protein localises to the mitochondrion matrix. Functionally, substrate recognition and binding subunit of the essential mitochondrial processing protease (MPP), which cleaves the mitochondrial sequence off newly imported precursors proteins. The chain is Mitochondrial-processing peptidase subunit alpha-2 (mppA2) from Dictyostelium discoideum (Social amoeba).